Here is a 257-residue protein sequence, read N- to C-terminus: Imidazole glycerol phosphate synthase subunit HisF (257 aa).

Residues Asp11 and Asp130 contribute to the active site.

This sequence belongs to the HisA/HisF family. In terms of assembly, heterodimer of HisH and HisF.

The protein localises to the cytoplasm. It carries out the reaction 5-[(5-phospho-1-deoxy-D-ribulos-1-ylimino)methylamino]-1-(5-phospho-beta-D-ribosyl)imidazole-4-carboxamide + L-glutamine = D-erythro-1-(imidazol-4-yl)glycerol 3-phosphate + 5-amino-1-(5-phospho-beta-D-ribosyl)imidazole-4-carboxamide + L-glutamate + H(+). Its pathway is amino-acid biosynthesis; L-histidine biosynthesis; L-histidine from 5-phospho-alpha-D-ribose 1-diphosphate: step 5/9. Functionally, IGPS catalyzes the conversion of PRFAR and glutamine to IGP, AICAR and glutamate. The HisF subunit catalyzes the cyclization activity that produces IGP and AICAR from PRFAR using the ammonia provided by the HisH subunit. This Shewanella piezotolerans (strain WP3 / JCM 13877) protein is Imidazole glycerol phosphate synthase subunit HisF.